A 575-amino-acid polypeptide reads, in one-letter code: Inactive terpenoid synthase 20, chloroplastic (575 aa).

The transit peptide at 1–52 directs the protein to the chloroplast; sequence MEAITKNGSLSQTLVHCGPKSLSSFIPVRCLRFSKNPFPKKLVVTRARTSIN. Residues Asp-332, Asp-336, Asp-474, Thr-478, and Glu-482 each contribute to the Mg(2+) site. The short motif at 332 to 336 is the DDXXD motif element; that stretch reads DDLYD.

This sequence belongs to the terpene synthase family. Tpsa subfamily. Predominantly expressed in roots but also in leaves and stems.

It is found in the plastid. The protein resides in the chloroplast. Does not possess diterpene synthase activity. This chain is Inactive terpenoid synthase 20, chloroplastic, found in Arabidopsis thaliana (Mouse-ear cress).